The primary structure comprises 313 residues: Aspartate carbamoyltransferase catalytic subunit (313 aa).

Carbamoyl phosphate is bound by residues arginine 51 and threonine 52. Lysine 80 contributes to the L-aspartate binding site. Arginine 101, histidine 129, and glutamine 132 together coordinate carbamoyl phosphate. L-aspartate-binding residues include arginine 162 and arginine 224. Leucine 263 and proline 264 together coordinate carbamoyl phosphate.

This sequence belongs to the aspartate/ornithine carbamoyltransferase superfamily. ATCase family. As to quaternary structure, heterododecamer (2C3:3R2) of six catalytic PyrB chains organized as two trimers (C3), and six regulatory PyrI chains organized as three dimers (R2).

The enzyme catalyses carbamoyl phosphate + L-aspartate = N-carbamoyl-L-aspartate + phosphate + H(+). The protein operates within pyrimidine metabolism; UMP biosynthesis via de novo pathway; (S)-dihydroorotate from bicarbonate: step 2/3. In terms of biological role, catalyzes the condensation of carbamoyl phosphate and aspartate to form carbamoyl aspartate and inorganic phosphate, the committed step in the de novo pyrimidine nucleotide biosynthesis pathway. The polypeptide is Aspartate carbamoyltransferase catalytic subunit (Phocaeicola vulgatus (strain ATCC 8482 / DSM 1447 / JCM 5826 / CCUG 4940 / NBRC 14291 / NCTC 11154) (Bacteroides vulgatus)).